The primary structure comprises 126 residues: Histone H2B type 1-P (126 aa).

A disordered region spans residues 1–36 (MPEPVKSVPAPKKGSKKAVTKAQKKDGKKRKRSRKE). P2 carries the post-translational modification N-acetylproline. E3 is modified (ADP-ribosyl glutamic acid). K6 carries the N6-(2-hydroxyisobutyryl)lysine; alternate modification. K6 bears the N6-(beta-hydroxybutyryl)lysine; alternate mark. K6 is modified (N6-acetyllysine; alternate). K6 carries the N6-butyryllysine; alternate modification. N6-crotonyllysine; alternate is present on K6. Position 6 is an N6-lactoyllysine; alternate (K6). K6 is covalently cross-linked (Glycyl lysine isopeptide (Lys-Gly) (interchain with G-Cter in SUMO2); alternate). The residue at position 7 (S7) is an ADP-ribosylserine. At K12 the chain carries N6-(beta-hydroxybutyryl)lysine; alternate. N6-acetyllysine; alternate is present on residues K12 and K13. Residues K12 and K13 each carry the N6-crotonyllysine; alternate modification. Position 12 is an N6-lactoyllysine; alternate (K12). Position 13 is an N6-(2-hydroxyisobutyryl)lysine; alternate (K13). Residue S15 is modified to Phosphoserine; by STK4/MST1. N6-acetyllysine; alternate is present on residues K16, K17, K21, and K24. K16, K17, K21, and K24 each carry N6-crotonyllysine; alternate. N6-lactoyllysine; alternate occurs at positions 16, 17, 21, and 24. K17 carries the N6-glutaryllysine; alternate modification. K21 and K24 each carry N6-(2-hydroxyisobutyryl)lysine; alternate. Residue K21 is modified to N6-(beta-hydroxybutyryl)lysine; alternate. Residue K21 is modified to N6-butyryllysine; alternate. K21 participates in a covalent cross-link: Glycyl lysine isopeptide (Lys-Gly) (interchain with G-Cter in SUMO2); alternate. K25 is subject to N6-(2-hydroxyisobutyryl)lysine. Residue K35 is modified to N6-(2-hydroxyisobutyryl)lysine; alternate. N6-(beta-hydroxybutyryl)lysine; alternate is present on K35. K35 carries the N6-crotonyllysine; alternate modification. K35 carries the N6-glutaryllysine; alternate modification. K35 bears the N6-succinyllysine; alternate mark. K35 participates in a covalent cross-link: Glycyl lysine isopeptide (Lys-Gly) (interchain with G-Cter in ubiquitin); alternate. Residue E36 is modified to PolyADP-ribosyl glutamic acid. A Phosphoserine; by AMPK modification is found at S37. An N6-(2-hydroxyisobutyryl)lysine; alternate mark is found at K44, K47, and K58. K44 carries the N6-lactoyllysine; alternate modification. 2 positions are modified to N6-glutaryllysine; alternate: K44 and K47. K47 carries the post-translational modification N6-methyllysine; alternate. K58 is subject to N6,N6-dimethyllysine; alternate. R80 carries the dimethylated arginine modification. N6-(2-hydroxyisobutyryl)lysine; alternate is present on K86. K86 is modified (N6-acetyllysine; alternate). Position 86 is an N6-lactoyllysine; alternate (K86). Residue K86 is modified to N6,N6,N6-trimethyllysine; alternate. Residues R87 and R93 each carry the omega-N-methylarginine modification. K109 is modified (N6-(2-hydroxyisobutyryl)lysine; alternate). N6-(beta-hydroxybutyryl)lysine; alternate is present on K109. K109 carries the post-translational modification N6-lactoyllysine; alternate. At K109 the chain carries N6-glutaryllysine; alternate. The residue at position 109 (K109) is an N6-methyllysine; alternate. S113 carries O-linked (GlcNAc) serine glycosylation. Phosphothreonine is present on T116. K117 and K121 each carry N6-(2-hydroxyisobutyryl)lysine; alternate. At K117 the chain carries N6-(beta-hydroxybutyryl)lysine; alternate. 2 positions are modified to N6-lactoyllysine; alternate: K117 and K121. Residues K117 and K121 each carry the N6-glutaryllysine; alternate modification. N6-succinyllysine; alternate is present on residues K117 and K121. An N6-methylated lysine; alternate modification is found at K117. Residue K121 forms a Glycyl lysine isopeptide (Lys-Gly) (interchain with G-Cter in ubiquitin); alternate linkage.

It belongs to the histone H2B family. The nucleosome is a histone octamer containing two molecules each of H2A, H2B, H3 and H4 assembled in one H3-H4 heterotetramer and two H2A-H2B heterodimers. The octamer wraps approximately 147 bp of DNA. In terms of processing, monoubiquitination at Lys-35 (H2BK34Ub) by the MSL1/MSL2 dimer is required for histone H3 'Lys-4' (H3K4me) and 'Lys-79' (H3K79me) methylation and transcription activation at specific gene loci, such as HOXA9 and MEIS1 loci. Similarly, monoubiquitination at Lys-121 (H2BK120Ub) by the RNF20/40 complex gives a specific tag for epigenetic transcriptional activation and is also prerequisite for histone H3 'Lys-4' and 'Lys-79' methylation. It also functions cooperatively with the FACT dimer to stimulate elongation by RNA polymerase II. H2BK120Ub also acts as a regulator of mRNA splicing: deubiquitination by USP49 is required for efficient cotranscriptional splicing of a large set of exons. Post-translationally, phosphorylated on Ser-15 (H2BS14ph) by STK4/MST1 during apoptosis; which facilitates apoptotic chromatin condensation. Also phosphorylated on Ser-15 in response to DNA double strand breaks (DSBs), and in correlation with somatic hypermutation and immunoglobulin class-switch recombination. Phosphorylation at Ser-37 (H2BS36ph) by AMPK in response to stress promotes transcription. GlcNAcylation at Ser-113 promotes monoubiquitination of Lys-121. It fluctuates in response to extracellular glucose, and associates with transcribed genes. In terms of processing, ADP-ribosylated by PARP1 or PARP2 on Ser-7 (H2BS6ADPr) in response to DNA damage. H2BS6ADPr promotes recruitment of CHD1L. Mono-ADP-ribosylated on Glu-3 (H2BE2ADPr) by PARP3 in response to single-strand breaks. Poly ADP-ribosylation on Glu-36 (H2BE35ADPr) by PARP1 regulates adipogenesis: it inhibits phosphorylation at Ser-37 (H2BS36ph), thereby blocking expression of pro-adipogenetic genes. Post-translationally, crotonylation (Kcr) is specifically present in male germ cells and marks testis-specific genes in post-meiotic cells, including X-linked genes that escape sex chromosome inactivation in haploid cells. Crotonylation marks active promoters and enhancers and confers resistance to transcriptional repressors. It is also associated with post-meiotically activated genes on autosomes. Hydroxybutyrylation of histones is induced by starvation. In terms of processing, lactylated in macrophages by EP300/P300 by using lactoyl-CoA directly derived from endogenous or exogenous lactate, leading to stimulates gene transcription.

The protein resides in the nucleus. It localises to the chromosome. In terms of biological role, core component of nucleosome. Nucleosomes wrap and compact DNA into chromatin, limiting DNA accessibility to the cellular machineries which require DNA as a template. Histones thereby play a central role in transcription regulation, DNA repair, DNA replication and chromosomal stability. DNA accessibility is regulated via a complex set of post-translational modifications of histones, also called histone code, and nucleosome remodeling. This chain is Histone H2B type 1-P (Hist1h2bp), found in Mus musculus (Mouse).